The chain runs to 654 residues: Heat shock 70 kDa protein 2 (654 aa).

The span at 612-646 (AGGEGGAPGAGFPGAGGPGGFPGAGAGGAHSGGDD) shows a compositional bias: gly residues. Residues 612-654 (AGGEGGAPGAGFPGAGGPGGFPGAGAGGAHSGGDDGPTVEEVD) form a disordered region.

This sequence belongs to the heat shock protein 70 family.

This Paracoccidioides lutzii (strain ATCC MYA-826 / Pb01) (Paracoccidioides brasiliensis) protein is Heat shock 70 kDa protein 2 (HSP70-2).